A 979-amino-acid polypeptide reads, in one-letter code: MAQVAMSALPAEDEESSESRMVVTFLMSALESMCKELAKSKAEVACIAVYETDVFVVGTERGRAFVNTRKDFQKDFVKYCVEEEEKAAEMHKMKCTTQANRMSVDAVEIETLRKTVEDYFCFCYGKALGKSTVVPVPYEKMLRDQSAVAVQGLPEGVAFKHPEHYDLATLKWILENKAGISFIIKRPFLEPKKHLGGRVMAADADRPMLSPGGSCGPIKVKTEPTEDSGISLEMAAVTVKEESEDPDYYQYNIQGSHHSSEGNEGAEVEVPAEDSTQHVPSETSEDPEVEVTIEDDDYSPPTKRPKSSEPPPPPPVPEPTNAGKRKVREFNFEKWNARITDLRKQVEELFERKYAQAIKAKGPVTIPYPLFQSHVEDLYVEGLPEGIPFRRPSTYGIPRLERILLAKERIRFVIKKHELLNSTREDLQLDKPASGVKEEWYARITKLRKMVDQLFCKKFAEALGSTEAKAVPYQKFEAYPNDLYVEGLPENIPFRSPSWYGIPRLEKIIQVGNRIKFVIKRPELLTHSTTEVTQPRTNTPVKEDWNVRITKLRKQVEEIFNLKFAQALGLTEAVKVPYPVFESNPEFLYVEGLPEGIPFRSPTWFGIPRLERIVRGSNKIKFVVKKPELVVSYLPPGMASKINTKALQSPKRPRSPGSNSKVPEIEVTVEGPNNNSPQTSTVRTPTQTNGSNVPFKPRGREFSFEAWNAKITDLKQKVENLFNEKCGEALGLKQAVKVPFALFESFPEDFYVEGLPEGVPFRRPSTFGIPRLEKILRNKAKIKFIIKKPEMFETAIKESTSSKSPPRKTNSSPSVNTTASGVEDLNIIQVTIPDDDNERLSKVEKARQLREQVNDLFSRKFGEAIGMGFPVKVPYRKITINPGCVVVDGMPPGVSFKAPSYLEISSMRRILDSAEFIKFTVIRPFPGLVINNQLVDQNESEGPVIQESAEASQLEVPATEEIKETDGSSQIKQEPDPTW.

Ala-2 is subject to N-acetylalanine. Position 19 is a phosphoserine (Ser-19). Glycyl lysine isopeptide (Lys-Gly) (interchain with G-Cter in SUMO2) cross-links involve residues Lys-35, Lys-86, Lys-92, and Lys-94. Position 103 is a phosphoserine (Ser-103). The stretch at 103–197 (SVDAVEIETL…FLEPKKHLGG (95 aa)) is one GTF2I-like 1 repeat. Lys-130 is subject to N6-acetyllysine; alternate. Residue Lys-130 forms a Glycyl lysine isopeptide (Lys-Gly) (interchain with G-Cter in SUMO2); alternate linkage. Residues Lys-140 and Lys-185 each participate in a glycyl lysine isopeptide (Lys-Gly) (interchain with G-Cter in SUMO2) cross-link. The disordered stretch occupies residues 205–231 (DRPMLSPGGSCGPIKVKTEPTEDSGIS). Phosphoserine is present on residues Ser-210 and Ser-214. Lys-219 is covalently cross-linked (Glycyl lysine isopeptide (Lys-Gly) (interchain with G-Cter in SUMO2)). A Glycyl lysine isopeptide (Lys-Gly) (interchain with G-Cter in SUMO2); alternate cross-link involves residue Lys-221. A Glycyl lysine isopeptide (Lys-Gly) (interchain with G-Cter in SUMO1); alternate cross-link involves residue Lys-221. Ser-228 carries the post-translational modification Phosphoserine. Residue Tyr-248 is modified to Phosphotyrosine; by BTK. The segment at 250-325 (QYNIQGSHHS…VPEPTNAGKR (76 aa)) is disordered. Positions 283–298 (TSEDPEVEVTIEDDDY) are enriched in acidic residues. Residues 300-307 (PPTKRPKS) carry the Nuclear localization signal motif. A Glycyl lysine isopeptide (Lys-Gly) (interchain with G-Cter in SUMO2) cross-link involves residue Lys-306. The segment covering 308 to 318 (SEPPPPPPVPE) has biased composition (pro residues). Residue Lys-324 forms a Glycyl lysine isopeptide (Lys-Gly) (interchain with G-Cter in SUMO2) linkage. One copy of the GTF2I-like 2 repeat lies at 333–427 (EKWNARITDL…ELLNSTREDL (95 aa)). Lys-334 bears the N6-acetyllysine; alternate mark. Lys-334 participates in a covalent cross-link: Glycyl lysine isopeptide (Lys-Gly) (interchain with G-Cter in SUMO2); alternate. A Glycyl lysine isopeptide (Lys-Gly) (interchain with G-Cter in SUMO2) cross-link involves residue Lys-361. Tyr-379 carries the post-translational modification Phosphotyrosine; by BTK. Ser-393 is modified (phosphoserine; by PKG/PRKG1). Lys-416 participates in a covalent cross-link: Glycyl lysine isopeptide (Lys-Gly) (interchain with G-Cter in SUMO2). Lys-431 is modified (N6-acetyllysine; alternate). Lys-431 participates in a covalent cross-link: Glycyl lysine isopeptide (Lys-Gly) (interchain with G-Cter in SUMO2); alternate. Residues Lys-437, Lys-469, and Lys-475 each participate in a glycyl lysine isopeptide (Lys-Gly) (interchain with G-Cter in SUMO2) cross-link. The stretch at 438–532 (EEWYARITKL…ELLTHSTTEV (95 aa)) is one GTF2I-like 3 repeat. The residue at position 484 (Tyr-484) is a Phosphotyrosine; by BTK. Ser-498 bears the Phosphoserine mark. Lys-507 is covalently cross-linked (Glycyl lysine isopeptide (Lys-Gly) (interchain with G-Cter in SUMO2)). A phosphothreonine mark is found at Thr-537 and Thr-539. Lys-542 participates in a covalent cross-link: Glycyl lysine isopeptide (Lys-Gly) (interchain with G-Cter in SUMO2). A GTF2I-like 4 repeat occupies 543-637 (EDWNVRITKL…ELVVSYLPPG (95 aa)). Glycyl lysine isopeptide (Lys-Gly) (interchain with G-Cter in SUMO2) cross-links involve residues Lys-641 and Lys-645. The disordered stretch occupies residues 642–695 (INTKALQSPKRPRSPGSNSKVPEIEVTVEGPNNNSPQTSTVRTPTQTNGSNVPF). Ser-649 carries the post-translational modification Phosphoserine. Lys-651 is covalently cross-linked (Glycyl lysine isopeptide (Lys-Gly) (interchain with G-Cter in SUMO2)). A Phosphoserine modification is found at Ser-655. Lys-661 is covalently cross-linked (Glycyl lysine isopeptide (Lys-Gly) (interchain with G-Cter in SUMO2)). The segment covering 671 to 692 (GPNNNSPQTSTVRTPTQTNGSN) has biased composition (polar residues). At Lys-696 the chain carries N6-acetyllysine; alternate. Lys-696 participates in a covalent cross-link: Glycyl lysine isopeptide (Lys-Gly) (interchain with G-Cter in SUMO2); alternate. Position 703 is a phosphoserine (Ser-703). The GTF2I-like 5 repeat unit spans residues 705 to 799 (EAWNAKITDL…EMFETAIKES (95 aa)). Ser-765 carries the post-translational modification Phosphoserine; by PKG/PRKG1. Lys-797 is covalently cross-linked (Glycyl lysine isopeptide (Lys-Gly) (interchain with G-Cter in SUMO2)). The disordered stretch occupies residues 797 to 818 (KESTSSKSPPRKTNSSPSVNTT). Ser-804 carries the post-translational modification Phosphoserine. Residues Lys-808, Lys-842, Lys-845, Lys-860, and Lys-872 each participate in a glycyl lysine isopeptide (Lys-Gly) (interchain with G-Cter in SUMO2) cross-link. A GTF2I-like 6 repeat occupies 840–934 (LSKVEKARQL…FPGLVINNQL (95 aa)). Positions 940–979 (SEGPVIQESAEASQLEVPATEEIKETDGSSQIKQEPDPTW) are disordered. Residue Lys-972 forms a Glycyl lysine isopeptide (Lys-Gly) (interchain with G-Cter in SUMO2); alternate linkage. Lys-972 is covalently cross-linked (Glycyl lysine isopeptide (Lys-Gly) (interchain with G-Cter in SUMO1); alternate).

The protein belongs to the TFII-I family. As to quaternary structure, homodimer (Potential). Interacts with SRF and PHOX1. Binds a pyrimidine-rich initiator (Inr) and a recognition site (E-box) for upstream stimulatory factor 1 (USF1). Associates with the PH domain of Bruton's tyrosine kinase (BTK). May be a component of a BHC histone deacetylase complex that contains HDAC1, HDAC2, HMG20B/BRAF35, KDM1A, RCOR1/CoREST, PHF21A/BHC80, ZMYM2, ZNF217, ZMYM3, GSE1 and GTF2I. Interacts with BTK and ARID3A. Interacts with isoform beta of PRKG1. In terms of processing, transiently phosphorylated on tyrosine residues by BTK in response to B-cell receptor stimulation. Phosphorylation on Tyr-248 and Tyr-379, and perhaps, on Tyr-484 contributes to BTK-mediated transcriptional activation. Sumoylated.

The protein resides in the cytoplasm. It is found in the nucleus. In terms of biological role, interacts with the basal transcription machinery by coordinating the formation of a multiprotein complex at the C-FOS promoter, and linking specific signal responsive activator complexes. Promotes the formation of stable high-order complexes of SRF and PHOX1 and interacts cooperatively with PHOX1 to promote serum-inducible transcription of a reporter gene deriven by the C-FOS serum response element (SRE). Acts as a coregulator for USF1 by binding independently two promoter elements, a pyrimidine-rich initiator (Inr) and an upstream E-box. Required for the formation of functional ARID3A DNA-binding complexes and for activation of immunoglobulin heavy-chain transcription upon B-lymphocyte activation. The polypeptide is General transcription factor II-I (Gtf2i) (Rattus norvegicus (Rat)).